The following is a 55-amino-acid chain: Large ribosomal subunit protein bL33 (55 aa).

The protein belongs to the bacterial ribosomal protein bL33 family.

The protein is Large ribosomal subunit protein bL33 of Dehalococcoides mccartyi (strain ATCC BAA-2266 / KCTC 15142 / 195) (Dehalococcoides ethenogenes (strain 195)).